Here is a 456-residue protein sequence, read N- to C-terminus: MGQTLFDKVWKKHVLHGKEGEPQLLYIDLHLIHEVTSPQAFEGLRIQNRKLRRPDLTFATLDHNVPTIDIFNIKDEIANKQITTLQQNAKDFGVHIFDMGSDEQGIVHMVGPETGLTQPGKTIVCGDSHTATHGAFGAIAFGIGTSEVEHVFATQTLWQTKPKNLKININGSLPAGVYAKDIILYLINQYGVDFGTGYALEFTGETIKNLSMEARMTICNMAIEAGAKYGLMQPDETTFNYVKGRPYATDFDSSMAWWKELYSDDDAYFDKVIELDVTNLEPQVTWGTNPEMGVSFSNPFPEIKNANDQRAYDYMGLHPGQKAEDIKLGYVFLGSCTNARLSDLIEASHIIKGQQVHPNITAIVVPGSRTVKKEAEALGLDKLFKDAGFEWREPGCSMCLGMNPDQVPEGVHCASTSNRNFEGRQGKGARTHLVSPAMAAAAAINGKFIDVRKVVV.

[4Fe-4S] cluster is bound by residues Cys-336, Cys-396, and Cys-399.

It belongs to the aconitase/IPM isomerase family. LeuC type 1 subfamily. As to quaternary structure, heterodimer of LeuC and LeuD. It depends on [4Fe-4S] cluster as a cofactor.

The enzyme catalyses (2R,3S)-3-isopropylmalate = (2S)-2-isopropylmalate. It participates in amino-acid biosynthesis; L-leucine biosynthesis; L-leucine from 3-methyl-2-oxobutanoate: step 2/4. Functionally, catalyzes the isomerization between 2-isopropylmalate and 3-isopropylmalate, via the formation of 2-isopropylmaleate. This chain is 3-isopropylmalate dehydratase large subunit, found in Staphylococcus epidermidis (strain ATCC 35984 / DSM 28319 / BCRC 17069 / CCUG 31568 / BM 3577 / RP62A).